Here is a 151-residue protein sequence, read N- to C-terminus: Transcriptional regulator MraZ (151 aa).

SpoVT-AbrB domains follow at residues 5 to 51 (AHEL…PVAE) and 81 to 124 (AEIL…GREQ).

This sequence belongs to the MraZ family. In terms of assembly, forms oligomers.

The protein resides in the cytoplasm. The protein localises to the nucleoid. This chain is Transcriptional regulator MraZ, found in Neisseria meningitidis serogroup A / serotype 4A (strain DSM 15465 / Z2491).